The following is a 528-amino-acid chain: Protein arginine N-methyltransferase 3 (528 aa).

The disordered stretch occupies residues 1 to 43 (MCSLAAGNGRGAELGPEPLELSDSGDDAGWEDEDADTEPAHGR). Cys-2 carries the N-acetylcysteine modification. Phosphoserine is present on residues Ser-22 and Ser-24. A compositionally biased stretch (acidic residues) spans 23-37 (DSGDDAGWEDEDADT). The C2H2-type zinc-finger motif lies at 46 to 69 (TPCLFCDRLFASAEETFSHCKLEH). At Ser-169 the chain carries Phosphoserine. The interval 184–528 (MKQFAQDFVM…NSSTQTYSLQ (345 aa)) is mediates interaction with ALDH1A1. The SAM-dependent MTase PRMT-type domain maps to 214-528 (DGVYFSSYGH…NSSTQTYSLQ (315 aa)). Arg-236, Gly-260, Asp-282, Ser-284, Ile-310, and Glu-311 together coordinate S-adenosyl-L-homocysteine. Residues Glu-326 and Glu-335 contribute to the active site.

The protein belongs to the class I-like SAM-binding methyltransferase superfamily. Protein arginine N-methyltransferase family. Monomer and homodimer. Interacts with EPB41L3 (via FERM domain); the interaction is direct and inhibits the protein-arginine N-methyltransferase activity of PRMT3. Interacts with the 40S ribosomal protein RPS2. Interacts with ALDH1A1; the interaction is direct, inhibits ALDH1A1 aldehyde dehydrogenase activity and is independent of the methyltransferase activity of PRMT3.

The protein resides in the cytoplasm. The protein localises to the cytosol. Its subcellular location is the nucleus. The catalysed reaction is L-arginyl-[protein] + S-adenosyl-L-methionine = N(omega)-methyl-L-arginyl-[protein] + S-adenosyl-L-homocysteine + H(+). The enzyme catalyses L-arginyl-[protein] + 2 S-adenosyl-L-methionine = N(omega),N(omega)-dimethyl-L-arginyl-[protein] + 2 S-adenosyl-L-homocysteine + 2 H(+). Inhibited by N-ethylmaleimide and high concentrations of zinc chloride. Protein-arginine N-methyltransferase that catalyzes both the monomethylation and asymmetric dimethylation of the guanidino nitrogens of arginine residues in target proteins, and therefore falls into the group of type I methyltransferases. Catalyzes the asymmetric arginine dimethylation at multiple sites in the Arg/Gly-rich region of small ribosomal subunit protein uS5/RPS2. Also appears to methylate other ribosomal proteins. May regulate retinoic acid synthesis and signaling by inhibiting ALDH1A1 retinal dehydrogenase activity. Contributes to methylation of histone H4 'Arg-3', a specific tag for epigenetic transcriptional activation. Promotes osteogenesis. This Mus musculus (Mouse) protein is Protein arginine N-methyltransferase 3.